Reading from the N-terminus, the 51-residue chain is Insulin (51 aa).

Intrachain disulfides connect Cys-8–Cys-37, Cys-20–Cys-50, and Cys-36–Cys-41.

The protein belongs to the insulin family. As to quaternary structure, heterodimer of a B chain and an A chain linked by two disulfide bonds.

The protein resides in the secreted. Insulin decreases blood glucose concentration. It increases cell permeability to monosaccharides, amino acids and fatty acids. It accelerates glycolysis, the pentose phosphate cycle, and glycogen synthesis in liver. The protein is Insulin (ins) of Gadus morhua subsp. callarias (Baltic cod).